Reading from the N-terminus, the 494-residue chain is One cut domain family member 3 (494 aa).

Disordered stretches follow at residues 130-162 (AAAV…RLAA), 199-239 (LSPL…GDKL), and 295-319 (AHGP…AAAE). Composition is skewed to pro residues over residues 148 to 158 (AAAPPPPPPPQ) and 214 to 225 (PQPPPPPPPPPL). The span at 297-313 (GPHGGGGGPGGSGGGPS) shows a compositional bias: gly residues. The CUT DNA-binding region spans 312–398 (PSAGAAAEEI…QRMSALRLAA (87 aa)). Residues 414–473 (PKKQRLVFTDLQRRTLIAIFKENKRPSKEMQVTISQQLGLELNTVSNFFMNARRRCMNRW) constitute a DNA-binding region (homeobox). The tract at residues 475–494 (EEPSTAPGGPAGATATFSKA) is disordered. Low complexity predominate over residues 476–494 (EPSTAPGGPAGATATFSKA).

It belongs to the CUT homeobox family.

It is found in the nucleus. In terms of biological role, transcriptional activator. Binds the consensus DNA sequence 5'-DHWATTGAYTWWD-3' on a variety of gene promoters such as those of HNF3B and TTR. The sequence is that of One cut domain family member 3 (ONECUT3) from Homo sapiens (Human).